A 359-amino-acid polypeptide reads, in one-letter code: Cytoplasmic tRNA 2-thiolation protein 1 (359 aa).

This sequence belongs to the TtcA family. CTU1/NCS6/ATPBD3 subfamily. Interacts with NCS2 and URM1. May act by forming a heterodimer with NCS2. Component of a large molecular weight complex of more than 250 kDa.

The protein resides in the cytoplasm. The protein localises to the mitochondrion. It functions in the pathway tRNA modification; 5-methoxycarbonylmethyl-2-thiouridine-tRNA biosynthesis. Functionally, plays a central role in 2-thiolation of mcm(5)S(2)U at tRNA wobble positions of tRNA(Lys), tRNA(Glu) and tRNA(Gln). Directly binds tRNAs and probably acts by catalyzing adenylation of tRNAs, an intermediate required for 2-thiolation. It is unclear whether it acts as a sulfurtransferase that transfers sulfur from thiocarboxylated URM1 onto the uridine of tRNAs at wobble position. Prior mcm(5) tRNA modification by the elongator complex is required for 2-thiolation. May also be involved in protein urmylation. The chain is Cytoplasmic tRNA 2-thiolation protein 1 from Saccharomyces cerevisiae (strain RM11-1a) (Baker's yeast).